Consider the following 707-residue polypeptide: Matrix metalloproteinase-9 (707 aa).

An N-terminal signal peptide occupies residues 1–19 (MSLWQPLVLVLLVLGCCFA). The propeptide at 20–93 (APRQRQSTLV…GELDSATLKA (74 aa)) is activation peptide. A glycan (N-linked (GlcNAc...) asparagine) is linked at Asn38. The short motif at 97 to 104 (PRCGVPDL) is the Cysteine switch element. Cys99 lines the Zn(2+) pocket. Residues Asn120 and Asn127 are each glycosylated (N-linked (GlcNAc...) asparagine). 2 residues coordinate Ca(2+): Asp131 and Asp165. 2 residues coordinate Zn(2+): His175 and Asp177. Positions 182, 183, 185, and 187 each coordinate Ca(2+). Zn(2+) is bound at residue His190. Positions 197, 199, and 201 each coordinate Ca(2+). His203 is a binding site for Zn(2+). Residues Asp205, Asp206, and Glu208 each coordinate Ca(2+). Fibronectin type-II domains follow at residues 225 to 273 (ADGA…FCPS), 283 to 331 (ADGK…FCPT), and 342 to 390 (SAGE…FCPD). Cystine bridges form between Cys230–Cys256, Cys244–Cys271, Cys288–Cys314, Cys302–Cys329, Cys347–Cys373, and Cys361–Cys388. Residue His401 coordinates Zn(2+). Glu402 is a catalytic residue. Positions 405 and 411 each coordinate Zn(2+). Residues 431 to 508 (LHKDDVNGIR…AGPSTATTVP (78 aa)) form a disordered region. Pro residues-rich tracts occupy residues 452–475 (RPPT…PPTV) and 486–499 (TGPP…PPTA). A disulfide bond links Cys516 and Cys704. 4 Hemopexin repeats span residues 518–563 (VNIF…WPAL), 564–608 (PRKL…GLGA), 610–657 (VAQV…FPGV), and 658–704 (PLDT…ILQC).

Belongs to the peptidase M10A family. As to quaternary structure, exists as monomer or homodimer; disulfide-linked. Also exists as heterodimer with LCN2. Macrophages and transformed cell lines produce only the monomeric form. Interacts with ECM1. In terms of assembly, (Microbial infection) Interacts with Staphylococcus aureus protein SSL5; this interaction inhibits MMP9 activity. It depends on Zn(2+) as a cofactor. Ca(2+) is required as a cofactor. Processing of the precursor yields different active forms of 64, 67 and 82 kDa. Sequentially processing by MMP3 yields the 82 kDa matrix metalloproteinase-9. Post-translationally, N- and O-glycosylated. Detected in neutrophils (at protein level). Produced by normal alveolar macrophages and granulocytes.

It is found in the secreted. It localises to the extracellular space. The protein resides in the extracellular matrix. It carries out the reaction Cleavage of gelatin types I and V and collagen types IV and V.. Its activity is regulated as follows. Inhibited by histatin-3 1/24 (histatin-5). Inhibited by ECM1. Its function is as follows. Matrix metalloproteinase that plays an essential role in local proteolysis of the extracellular matrix and in leukocyte migration. Could play a role in bone osteoclastic resorption. Cleaves KiSS1 at a Gly-|-Leu bond. Cleaves NINJ1 to generate the Secreted ninjurin-1 form. Cleaves type IV and type V collagen into large C-terminal three quarter fragments and shorter N-terminal one quarter fragments. Degrades fibronectin but not laminin or Pz-peptide. The protein is Matrix metalloproteinase-9 (MMP9) of Homo sapiens (Human).